The sequence spans 568 residues: Sulfite reductase [NADPH] hemoprotein beta-component (568 aa).

Residues Cys-425, Cys-431, Cys-470, and Cys-474 each coordinate [4Fe-4S] cluster. Residue Cys-474 coordinates siroheme.

The protein belongs to the nitrite and sulfite reductase 4Fe-4S domain family. Alpha(8)-beta(8). The alpha component is a flavoprotein, the beta component is a hemoprotein. The cofactor is siroheme. It depends on [4Fe-4S] cluster as a cofactor.

The catalysed reaction is hydrogen sulfide + 3 NADP(+) + 3 H2O = sulfite + 3 NADPH + 4 H(+). The protein operates within sulfur metabolism; hydrogen sulfide biosynthesis; hydrogen sulfide from sulfite (NADPH route): step 1/1. Component of the sulfite reductase complex that catalyzes the 6-electron reduction of sulfite to sulfide. This is one of several activities required for the biosynthesis of L-cysteine from sulfate. This Xanthomonas oryzae pv. oryzae (strain MAFF 311018) protein is Sulfite reductase [NADPH] hemoprotein beta-component.